We begin with the raw amino-acid sequence, 667 residues long: Probable export ATP-binding/permease protein MacB (667 aa).

Residues 22-260 (LRLAGVSRRF…PVEEVQPAAE (239 aa)) enclose the ABC transporter domain. Residue 58-65 (GASGSGKS) coordinates ATP. A run of 4 helical transmembrane segments spans residues 292–312 (LLTM…SAIG), 540–560 (LTLL…IGVM), 601–621 (IGGV…ALFV), and 630–650 (LGSI…FGFV).

The protein belongs to the ABC transporter superfamily. Macrolide exporter (TC 3.A.1.122) family. In terms of assembly, probably part of a tripartite efflux system, which is composed of an inner membrane transporter, a periplasmic membrane fusion protein, and an outer membrane component.

It is found in the cell inner membrane. Probably part of a tripartite efflux system. The polypeptide is Probable export ATP-binding/permease protein MacB (Pseudomonas entomophila (strain L48)).